The sequence spans 250 residues: ATP synthase subunit a (250 aa).

6 helical membrane-spanning segments follow: residues alanine 29–serine 49, phenylalanine 84–valine 104, isoleucine 114–isoleucine 134, leucine 143–isoleucine 163, isoleucine 185–isoleucine 205, and alanine 208–leucine 228.

Belongs to the ATPase A chain family. F-type ATPases have 2 components, CF(1) - the catalytic core - and CF(0) - the membrane proton channel. CF(1) has five subunits: alpha(3), beta(3), gamma(1), delta(1), epsilon(1). CF(0) has three main subunits: a(1), b(2) and c(9-12). The alpha and beta chains form an alternating ring which encloses part of the gamma chain. CF(1) is attached to CF(0) by a central stalk formed by the gamma and epsilon chains, while a peripheral stalk is formed by the delta and b chains.

Its subcellular location is the cell inner membrane. Functionally, key component of the proton channel; it plays a direct role in the translocation of protons across the membrane. In Rhizobium rhizogenes (strain K84 / ATCC BAA-868) (Agrobacterium radiobacter), this protein is ATP synthase subunit a.